Reading from the N-terminus, the 592-residue chain is MEMQDLTSPHSRLSGSSESPSGPKLGNSHINSNSMTPNGTEVKTEPMSSSETASTTADGSLNNFSGSAIGSSSFSPRPTHQFSPPQIYPSNRPYPHILPTPSSQTMAAYGQTQFTTGMQQATAYATYPQPGQPYGISSYGALWAGIKTEGGLSQSQSPGQTGFLSYGTSFSTPQPGQAPYSYQMQGSSFTTSSGIYTGNNSLTNSSGFNSSQQDYPSYPSFGQGQYAQYYNSSPYPAHYMTSSNTSPTTPSTNATYQLQEPPSGITSQAVTDPTAEYSTIHSPSTPIKDSDSDRLRRGSDGKSRGRGRRNNNPSPPPDSDLERVFIWDLDETIIVFHSLLTGSYANRYGRDPPTSVSLGLRMEEMIFNLADTHLFFNDLEECDQVHIDDVSSDDNGQDLSTYNFGTDGFPAAATSANLCLATGVRGGVDWMRKLAFRYRRVKEIYNTYKNNVGGLLGPAKREAWLQLRAEIEALTDSWLTLALKALSLIHSRTNCVNILVTTTQLIPALAKVLLYGLGIVFPIENIYSATKIGKESCFERIIQRFGRKVVYVVIGDGVEEEQGAKKHAMPFWRISSHSDLMALHHALELEYL.

Disordered regions lie at residues 1–95 (MEMQ…RPYP) and 240–320 (MTSS…PDSD). Residues 8-26 (SPHSRLSGSSESPSGPKLG) are compositionally biased toward low complexity. Residues 28–63 (SHINSNSMTPNGTEVKTEPMSSSETASTTADGSLNN) are compositionally biased toward polar residues. Composition is skewed to low complexity over residues 64–75 (FSGSAIGSSSFS) and 241–253 (TSSN…PSTN). The segment covering 254-287 (ATYQLQEPPSGITSQAVTDPTAEYSTIHSPSTPI) has biased composition (polar residues). The segment covering 288–303 (KDSDSDRLRRGSDGKS) has biased composition (basic and acidic residues). Aspartate 328 functions as the Nucleophile in the catalytic mechanism. Mg(2+)-binding residues include aspartate 328, aspartate 330, and aspartate 556. Aspartate 330 acts as the Proton donor in catalysis.

The protein belongs to the HAD-like hydrolase superfamily. EYA family. Probably interacts with SIX2, SIX4 and SIX5. Interacts with H2AX in response to DNA damage. Interacts with SIX3; promotes EYA1 translocation to the nucleus. The cofactor is Mg(2+). Sumoylated with SUMO1. In terms of tissue distribution, in the embryo, highly expressed in kidney with lower levels in brain. Weakly expressed in lung. In the adult, highly expressed in heart and skeletal muscle. Weakly expressed in brain and liver. No expression in eye or kidney.

It is found in the cytoplasm. The protein localises to the nucleus. The catalysed reaction is O-phospho-L-tyrosyl-[protein] + H2O = L-tyrosyl-[protein] + phosphate. It carries out the reaction O-phospho-L-seryl-[protein] + H2O = L-seryl-[protein] + phosphate. The enzyme catalyses O-phospho-L-threonyl-[protein] + H2O = L-threonyl-[protein] + phosphate. Functions both as protein phosphatase and as transcriptional coactivator for SIX1, and probably also for SIX2, SIX4 and SIX5. Tyrosine phosphatase that dephosphorylates 'Tyr-142' of histone H2AX (H2AXY142ph) and promotes efficient DNA repair via the recruitment of DNA repair complexes containing MDC1. 'Tyr-142' phosphorylation of histone H2AX plays a central role in DNA repair and acts as a mark that distinguishes between apoptotic and repair responses to genotoxic stress. Its function as histone phosphatase may contribute to its function in transcription regulation during organogenesis. Also has phosphatase activity with proteins phosphorylated on Ser and Thr residues (in vitro). Required for normal embryonic development of the craniofacial and trunk skeleton, kidneys and ears. Together with SIX1, it plays an important role in hypaxial muscle development; in this it is functionally redundant with EYA2. The polypeptide is Protein phosphatase EYA1 (EYA1) (Homo sapiens (Human)).